Consider the following 606-residue polypeptide: UvrABC system protein C (606 aa).

The GIY-YIG domain occupies 19–97 (QSCGVYQMIG…IKSLKPPYNI (79 aa)). The UVR domain maps to 207-242 (EKVKKQLSSTMEKCSKEENYELAAIYRDRLKFLEQI).

Belongs to the UvrC family. As to quaternary structure, interacts with UvrB in an incision complex.

Its subcellular location is the cytoplasm. Its function is as follows. The UvrABC repair system catalyzes the recognition and processing of DNA lesions. UvrC both incises the 5' and 3' sides of the lesion. The N-terminal half is responsible for the 3' incision and the C-terminal half is responsible for the 5' incision. This is UvrABC system protein C from Wolbachia sp. subsp. Brugia malayi (strain TRS).